The sequence spans 274 residues: Probable lipoprotein peptidase YaeF (274 aa).

The first 20 residues, 1–20 (MDKPKAYCRLFLPSFLLLSA), serve as a signal peptide directing secretion. A lipid anchor (N-palmitoyl cysteine) is attached at C21. A lipid anchor (S-diacylglycerol cysteine) is attached at C21. C207 serves as the catalytic Nucleophile. Residue H257 is the Proton acceptor of the active site.

Its subcellular location is the cell inner membrane. The polypeptide is Probable lipoprotein peptidase YaeF (yaeF) (Escherichia coli (strain K12)).